Consider the following 267-residue polypeptide: Glutamate racemase (267 aa).

Substrate-binding positions include 13-14 and 45-46; these read DS and YS. Cys77 functions as the Proton donor/acceptor in the catalytic mechanism. 78 to 79 is a substrate binding site; sequence NT. The Proton donor/acceptor role is filled by Cys188. 189–190 is a binding site for substrate; that stretch reads TH.

Belongs to the aspartate/glutamate racemases family.

The enzyme catalyses L-glutamate = D-glutamate. Its pathway is cell wall biogenesis; peptidoglycan biosynthesis. Provides the (R)-glutamate required for cell wall biosynthesis. This chain is Glutamate racemase, found in Histophilus somni (strain 2336) (Haemophilus somnus).